Reading from the N-terminus, the 162-residue chain is Xylulose kinase (162 aa).

The segment at Gly-16–Gln-39 is disordered. Low complexity predominate over residues Ala-20 to Ala-33.

This sequence belongs to the FGGY kinase family.

It catalyses the reaction D-xylulose + ATP = D-xylulose 5-phosphate + ADP + H(+). In terms of biological role, catalyzes the phosphorylation of D-xylulose to D-xylulose 5-phosphate. This chain is Xylulose kinase, found in Actinoplanes sp. (strain ATCC 31351 / 3876) (Ampullariella sp.).